The following is a 205-amino-acid chain: MAAARPILGRVLPGSSILFLCDMQEKFRHNIAYFPQIVSVAARMLRVARLLEVPVLLTEQYPQGLGPTVPELGAEGLQPLTKTCFSMVPALQQELDSRPQLRSVLLCGIEAQACILNTTLDLLDRGLQVHVVVDACSSRSQVDRLVALARMRQSGAFLSTSEGLILQLVGDAAHPQFKEIQKLIKEPAPDSGLLGLFQGQNPLLH.

The protein belongs to the isochorismatase family. As to quaternary structure, interacts with CDKN2A.

It is found in the cytoplasm. The protein localises to the nucleus. The chain is Isochorismatase domain-containing protein 2 (ISOC2) from Macaca fascicularis (Crab-eating macaque).